The sequence spans 75 residues: Sec-independent protein translocase protein TatA (75 aa).

Residues 1 to 21 (MGGFSIWHWLIVLVIVLLVFG) form a helical membrane-spanning segment. The interval 41–75 (KGMHDDDKPAGKLGDDSRTAEQAREAQAERDRDAR) is disordered.

This sequence belongs to the TatA/E family. As to quaternary structure, the Tat system comprises two distinct complexes: a TatABC complex, containing multiple copies of TatA, TatB and TatC subunits, and a separate TatA complex, containing only TatA subunits. Substrates initially bind to the TatABC complex, which probably triggers association of the separate TatA complex to form the active translocon.

It localises to the cell inner membrane. Part of the twin-arginine translocation (Tat) system that transports large folded proteins containing a characteristic twin-arginine motif in their signal peptide across membranes. TatA could form the protein-conducting channel of the Tat system. The sequence is that of Sec-independent protein translocase protein TatA from Xanthomonas axonopodis pv. citri (strain 306).